The following is a 211-amino-acid chain: tRNA (guanine-N(7)-)-methyltransferase (211 aa).

4 residues coordinate S-adenosyl-L-methionine: E43, D68, N95, and N117. K121 is a substrate binding site. Positions 123–128 (RHNKRR) are interaction with RNA. Substrate-binding positions include D153 and 190-193 (TEYE).

This sequence belongs to the class I-like SAM-binding methyltransferase superfamily. TrmB family.

It catalyses the reaction guanosine(46) in tRNA + S-adenosyl-L-methionine = N(7)-methylguanosine(46) in tRNA + S-adenosyl-L-homocysteine. It participates in tRNA modification; N(7)-methylguanine-tRNA biosynthesis. Its function is as follows. Catalyzes the formation of N(7)-methylguanine at position 46 (m7G46) in tRNA. This is tRNA (guanine-N(7)-)-methyltransferase from Clostridium tetani (strain Massachusetts / E88).